Consider the following 156-residue polypeptide: Ribosome-binding factor A (156 aa).

The segment covering 125-138 (RVREGAKHAGDPDP) has biased composition (basic and acidic residues). The interval 125–156 (RVREGAKHAGDPDPYRVGGAEDTDGDTDGDER) is disordered. Residues 145–156 (EDTDGDTDGDER) are compositionally biased toward acidic residues.

It belongs to the RbfA family. Monomer. Binds 30S ribosomal subunits, but not 50S ribosomal subunits or 70S ribosomes.

The protein resides in the cytoplasm. One of several proteins that assist in the late maturation steps of the functional core of the 30S ribosomal subunit. Associates with free 30S ribosomal subunits (but not with 30S subunits that are part of 70S ribosomes or polysomes). Required for efficient processing of 16S rRNA. May interact with the 5'-terminal helix region of 16S rRNA. In Mycolicibacterium smegmatis (strain ATCC 700084 / mc(2)155) (Mycobacterium smegmatis), this protein is Ribosome-binding factor A.